The following is a 248-amino-acid chain: MGKRLLVQRRGRGGSVFRNPGWKRLGPARYPPYNPEEFKNKVLVGVVKDLLHEPGRGAPLALVEFEDGTKMYMIPPEGLAVGQKIYYGAKAPAVLGSIVEIGNVPEGTIVSNIEIRPGDGGKLARSSGAYALVLAHSNGKTLIQLPSKKVKEVSSEARATIGMVAAGGRIEKPMLKAGKMWHWSRAKSFKYPTVRGKAMSAYAHPAGGGHHPKGLTPAPRNAPPGRKVGHIAPRRTGRKKGASRTPTQ.

The segment at 203-248 (AHPAGGGHHPKGLTPAPRNAPPGRKVGHIAPRRTGRKKGASRTPTQ) is disordered. Residues 227–242 (KVGHIAPRRTGRKKGA) show a composition bias toward basic residues.

It belongs to the universal ribosomal protein uL2 family. As to quaternary structure, part of the 50S ribosomal subunit. Forms a bridge to the 30S subunit in the 70S ribosome.

In terms of biological role, one of the primary rRNA binding proteins. Required for association of the 30S and 50S subunits to form the 70S ribosome, for tRNA binding and peptide bond formation. It has been suggested to have peptidyltransferase activity; this is somewhat controversial. Makes several contacts with the 16S rRNA in the 70S ribosome. In Thermofilum pendens (strain DSM 2475 / Hrk 5), this protein is Large ribosomal subunit protein uL2.